The primary structure comprises 116 residues: Hydrogenase maturation factor HypA (116 aa).

Residue H2 coordinates Ni(2+). C73, C76, C90, and C93 together coordinate Zn(2+).

The protein belongs to the HypA/HybF family.

Functionally, involved in the maturation of [NiFe] hydrogenases. Required for nickel insertion into the metal center of the hydrogenase. In Escherichia coli O157:H7, this protein is Hydrogenase maturation factor HypA.